The chain runs to 20 residues: Peptidase T (20 aa).

Belongs to the peptidase M20B family. Zn(2+) is required as a cofactor. It depends on Co(2+) as a cofactor.

It localises to the cell envelope. The catalysed reaction is Release of the N-terminal residue from a tripeptide.. Inhibited by the chelating agents EDTA and 1,10-phenanthroline, by bestatin and amastatin, p-hydroxymercuribenzoate and some divalent cations at high concentration. Cleaves a wide range of dipeptides and tripeptides, but does not display activity against larger peptides. May have a role in the survival of F.nucleatum in the subgingival environment of the mouth. The polypeptide is Peptidase T (pepT) (Fusobacterium nucleatum subsp. polymorphum (Fusobacterium polymorphum)).